Consider the following 167-residue polypeptide: uncharacterized protein (167 aa).

2 consecutive DED domains span residues 2–75 (DLKT…NLFQ) and 93–167 (THVL…AKTV).

This is an uncharacterized protein from Saimiriine herpesvirus 2 (strain 11) (SaHV-2).